The chain runs to 65 residues: Large ribosomal subunit protein bL35 (65 aa).

Residues 1-16 (MVPKQKTHSGAKKRFK) show a composition bias toward basic residues. Positions 1–39 (MVPKQKTHSGAKKRFKLTGSGSVSRARAGMRHNFEHRSS) are disordered.

This sequence belongs to the bacterial ribosomal protein bL35 family.

This Tropheryma whipplei (strain TW08/27) (Whipple's bacillus) protein is Large ribosomal subunit protein bL35.